We begin with the raw amino-acid sequence, 168 residues long: MSWWSGVWRSVWSALSREVREHVGTDHLGNKYYYVAEYKNWRGQTIREKRIVEAANRKEVDYEAGDIPTEWEAWIRRTRKTPPTMEEILKNEKYREEIKIKSQDFYEKDKLGKETSEELLPSPTATQVKGHASAPYFGREEPSVAPTSTGKTFQPGSWTPEDGKRQSQ.

The disordered stretch occupies residues 112–168 (GKETSEELLPSPTATQVKGHASAPYFGREEPSVAPTSTGKTFQPGSWTPEDGKRQSQ). Residue S133 is modified to Phosphoserine. The segment covering 145-157 (APTSTGKTFQPGS) has biased composition (polar residues).

This sequence belongs to the complex I NDUFA12 subunit family. As to quaternary structure, interacts with ARMC9.

Its subcellular location is the mitochondrion. Acts as a molecular chaperone for mitochondrial complex I assembly. Complex I functions in the transfer of electrons from NADH to the respiratory chain. The immediate electron acceptor for the enzyme is believed to be ubiquinone. Is involved in the initial steps of cilia formation, including removal of CP110 from the mother centrioles, docking of membrane vesicles to the mother centrioles, and establishment of the transition zone. The polypeptide is NADH dehydrogenase [ubiquinone] 1 alpha subcomplex assembly factor 2 (Ndufaf2) (Mus musculus (Mouse)).